We begin with the raw amino-acid sequence, 544 residues long: Chaperonin GroEL (544 aa).

Residues 30–33, lysine 51, 87–91, glycine 415, 481–483, and aspartate 497 each bind ATP; these read TLGP, DGTTT, and DAL.

Belongs to the chaperonin (HSP60) family. Forms a cylinder of 14 subunits composed of two heptameric rings stacked back-to-back. Interacts with the co-chaperonin GroES.

It localises to the cytoplasm. The enzyme catalyses ATP + H2O + a folded polypeptide = ADP + phosphate + an unfolded polypeptide.. In terms of biological role, together with its co-chaperonin GroES, plays an essential role in assisting protein folding. The GroEL-GroES system forms a nano-cage that allows encapsulation of the non-native substrate proteins and provides a physical environment optimized to promote and accelerate protein folding. The polypeptide is Chaperonin GroEL (Chlamydia trachomatis serovar D (strain ATCC VR-885 / DSM 19411 / UW-3/Cx)).